The following is a 459-amino-acid chain: Vanillin aminotransferase (459 aa).

Pyridoxal 5'-phosphate is bound by residues 115–116 (GS) and Asp-255. Lys-284 is modified (N6-(pyridoxal phosphate)lysine). A pyridoxal 5'-phosphate-binding site is contributed by 320 to 321 (FT). Residues 428 to 459 (LSLEELDELIRIYGKALKDTEKRVEELKSQKK) are a coiled coil.

Belongs to the class-III pyridoxal-phosphate-dependent aminotransferase family. Expressed in placental tissue of immature fruit.

It catalyses the reaction vanillin + L-alanine = vanillylamine + pyruvate. Its pathway is aromatic compound metabolism; phenylpropanoid biosynthesis. Its function is as follows. Involved in the biosynthesis of capsaicinoids natural products, pungent alkaloids synthesized from phenylpropanoid intermediates in the placental tissue of chili pepper fruit acting as repellant on herbivorous mammals and conferring spiciness to hot peppers. Can transfer an amine from vanillylamine to pyruvate forming vanillin and L-alanine. Can use pyruvate or oxaloacetate, but not 2-oxoglutarate as amino group acceptors. Is able to convert (S)-1-phenylethylamine into acetophenone in vitro. This is Vanillin aminotransferase from Capsicum chinense (Scotch bonnet).